The following is a 367-amino-acid chain: Aminomethyltransferase (367 aa).

This sequence belongs to the GcvT family. In terms of assembly, the glycine cleavage system is composed of four proteins: P, T, L and H.

It carries out the reaction N(6)-[(R)-S(8)-aminomethyldihydrolipoyl]-L-lysyl-[protein] + (6S)-5,6,7,8-tetrahydrofolate = N(6)-[(R)-dihydrolipoyl]-L-lysyl-[protein] + (6R)-5,10-methylene-5,6,7,8-tetrahydrofolate + NH4(+). Its function is as follows. The glycine cleavage system catalyzes the degradation of glycine. This Mycobacterium avium (strain 104) protein is Aminomethyltransferase.